The chain runs to 472 residues: MPQNRSMESQAYSLPLILPDLRREEAIHQITDTLQHLQTVSNDIFSRILQRVETNRGQLQRINGRLSLAQAKIERLKGIKKAIKVFSSAKYPAPEHLQEYSSVFAGAEDGWLAKKLRHKIQSKHRPLDEQAVQEKLKYFPVCVNTRGQDEESAEEGLGSLPRNISSVSSLLLFNTTENLYKKYVFLDPLAGVVTRTNPALEGEDEEKLFDAPLSITKREQLERQTAENYFYVPDLGQVPEIDVPYSLPDLPGVADDLMYSADLGPGIAPSAPGVPIPELPTFITEDITENSRTDSQDGRLLPPPPPPPPPPPPPPPPEPSVLSPPTSLAPPLPIPAPARVGSSDVGDPGSLQGAPKEVVNPSDGRASLLESIRQAGGIGKAKLRNVKEKKLEKKKMKEQEQVRATGGGGDLMSDLFNKLAMRRKGISGKGPAAGEASGDGPTGAFARISDTIPPLPPPDQASGDGDEEDWES.

A required for WASH complex assembly region spans residues 1-51 (MPQNRSMESQAYSLPLILPDLRREEAIHQITDTLQHLQTVSNDIFSRILQR). 3 disordered regions span residues 289 to 365 (ENSR…SDGR), 377 to 412 (GIGK…GDLM), and 426 to 472 (ISGK…DWES). Composition is skewed to pro residues over residues 301-319 (LPPP…PPEP) and 327-336 (SLAPPLPIPA). Residues 352-472 (QGAPKEVVNP…GDGDEEDWES (121 aa)) are VCA. The 23-residue stretch at 364–386 (GRASLLESIRQAGGIGKAKLRNV) folds into the WH2 domain. Positions 385-401 (NVKEKKLEKKKMKEQEQ) are enriched in basic and acidic residues.

This sequence belongs to the WASH1 family. As to quaternary structure, component of the WASH complex.

The protein localises to the early endosome membrane. Its subcellular location is the recycling endosome membrane. In terms of biological role, acts as a nucleation-promoting factor at the surface of endosomes, where it recruits and activates the Arp2/3 complex to induce actin polymerization, playing a key role in the fission of tubules that serve as transport intermediates during endosome sorting. The protein is WASH complex subunit 1 of Xenopus tropicalis (Western clawed frog).